The sequence spans 470 residues: mRNA export factor ICP27 homolog (470 aa).

Disordered stretches follow at residues 1 to 31 (MALS…TGGD) and 62 to 204 (VGDP…DRLN). Residues 71 to 85 (VSFSASPQRAQPSNP) are compositionally biased toward polar residues. Composition is skewed to basic residues over residues 94–107 (HGRR…RRNN) and 178–187 (RVHRNRRRGN). Zn(2+)-binding residues include cysteine 359, histidine 437, cysteine 441, and cysteine 446. The CHC2-type zinc finger occupies 359 to 446 (CYLSSSGSPT…HKRRCKADTC (88 aa)).

This sequence belongs to the HHV-1 ICP27 protein family. In terms of assembly, homodimer. Homodimerization is required for transactivation. Associates in a complex with RNA, and host export factors NXF1/TAP and ALYREF; these interactions allow nuclear export of viral transcripts. Interacts with three host shuttling SR proteins SRSF1, SRSF3 and SRSF7. Interacts with host SRPK1. Interacts with IE62; this interaction enhances IE62 transactivation.

It localises to the host cytoplasm. Its subcellular location is the host nucleus. Functionally, multifunctional regulator of the expression of viral genes that mediates nuclear export of viral intronless mRNAs. This immediate early (EI) protein promotes the nuclear export of viral intronless mRNAs by interacting with mRNAs and host NXF1/TAP. This chain is mRNA export factor ICP27 homolog, found in Equine herpesvirus 1 (strain Ab4p) (EHV-1).